The sequence spans 158 residues: Endoribonuclease YbeY (158 aa).

Zn(2+)-binding residues include His117, His121, and His127.

This sequence belongs to the endoribonuclease YbeY family. Zn(2+) is required as a cofactor.

It localises to the cytoplasm. In terms of biological role, single strand-specific metallo-endoribonuclease involved in late-stage 70S ribosome quality control and in maturation of the 3' terminus of the 16S rRNA. The protein is Endoribonuclease YbeY of Buchnera aphidicola subsp. Schizaphis graminum (strain Sg).